We begin with the raw amino-acid sequence, 554 residues long: Urocanate hydratase (554 aa).

NAD(+) contacts are provided by residues 52-53 (GG), Gln130, 176-178 (GMG), Glu196, Arg201, 242-243 (NA), 263-267 (QTSAH), 273-274 (YL), and Tyr322. The active site involves Cys410. Gly492 lines the NAD(+) pocket.

This sequence belongs to the urocanase family. The cofactor is NAD(+).

The protein localises to the cytoplasm. The catalysed reaction is 4-imidazolone-5-propanoate = trans-urocanate + H2O. The protein operates within amino-acid degradation; L-histidine degradation into L-glutamate; N-formimidoyl-L-glutamate from L-histidine: step 2/3. In terms of biological role, catalyzes the conversion of urocanate to 4-imidazolone-5-propionate. The sequence is that of Urocanate hydratase from Shewanella halifaxensis (strain HAW-EB4).